The chain runs to 417 residues: BSD domain-containing protein 1-B (417 aa).

A BSD domain is found at tryptophan 153 to glutamate 205. Disordered stretches follow at residues lysine 215 to glutamate 234, histidine 262 to proline 292, and alanine 323 to methionine 390. Residues histidine 262–threonine 278 show a composition bias toward basic and acidic residues. Residues threonine 281 to proline 292 are compositionally biased toward low complexity. The span at proline 332 to methionine 343 shows a compositional bias: polar residues. The span at threonine 345–valine 356 shows a compositional bias: basic and acidic residues. Positions asparagine 360–aspartate 379 are enriched in polar residues. The span at valine 380 to methionine 390 shows a compositional bias: acidic residues.

The protein is BSD domain-containing protein 1-B (bsdc1-b) of Xenopus laevis (African clawed frog).